The sequence spans 411 residues: Tyrosine--tRNA ligase (411 aa).

Tyrosine 34 provides a ligand contact to L-tyrosine. A 'HIGH' region motif is present at residues 39–48; that stretch reads CTATSLHIGS. L-tyrosine contacts are provided by tyrosine 171 and glutamine 175. Residues 231 to 235 carry the 'KMSKS' region motif; the sequence is KMGKT. Residue lysine 234 coordinates ATP. The region spanning 345–411 is the S4 RNA-binding domain; the sequence is ISAYELFHEA…GKKRHILVRV (67 aa).

It belongs to the class-I aminoacyl-tRNA synthetase family. TyrS type 1 subfamily. As to quaternary structure, homodimer.

The protein localises to the cytoplasm. The catalysed reaction is tRNA(Tyr) + L-tyrosine + ATP = L-tyrosyl-tRNA(Tyr) + AMP + diphosphate + H(+). Catalyzes the attachment of tyrosine to tRNA(Tyr) in a two-step reaction: tyrosine is first activated by ATP to form Tyr-AMP and then transferred to the acceptor end of tRNA(Tyr). The sequence is that of Tyrosine--tRNA ligase from Rickettsia felis (strain ATCC VR-1525 / URRWXCal2) (Rickettsia azadi).